We begin with the raw amino-acid sequence, 117 residues long: MELGLSWVFLVAILEGVQCEVQLVESGGGLVQPGGSLRLSCAASGFTFSSYWMSWVRQAPGKGLEWVANIKQDGSEKYYVDSVKGRFTISRDNAKNSLYLQMNSLRAEDTAVYYCAR.

The signal sequence occupies residues 1-19 (MELGLSWVFLVAILEGVQC). The tract at residues 20–44 (EVQLVESGGGLVQPGGSLRLSCAAS) is framework-1. In terms of domain architecture, Ig-like spans 20 to 117 (EVQLVESGGG…EDTAVYYCAR (98 aa)). An intrachain disulfide couples Cys41 to Cys115. The complementarity-determining-1 stretch occupies residues 45 to 52 (GFTFSSYW). The tract at residues 53–69 (MSWVRQAPGKGLEWVAN) is framework-2. The complementarity-determining-2 stretch occupies residues 70-77 (IKQDGSEK). The tract at residues 78 to 115 (YYVDSVKGRFTISRDNAKNSLYLQMNSLRAEDTAVYYC) is framework-3. The interval 116–117 (AR) is complementarity-determining-3.

In terms of assembly, immunoglobulins are composed of two identical heavy chains and two identical light chains; disulfide-linked.

It localises to the secreted. The protein resides in the cell membrane. In terms of biological role, v region of the variable domain of immunoglobulin heavy chains that participates in the antigen recognition. Immunoglobulins, also known as antibodies, are membrane-bound or secreted glycoproteins produced by B lymphocytes. In the recognition phase of humoral immunity, the membrane-bound immunoglobulins serve as receptors which, upon binding of a specific antigen, trigger the clonal expansion and differentiation of B lymphocytes into immunoglobulins-secreting plasma cells. Secreted immunoglobulins mediate the effector phase of humoral immunity, which results in the elimination of bound antigens. The antigen binding site is formed by the variable domain of one heavy chain, together with that of its associated light chain. Thus, each immunoglobulin has two antigen binding sites with remarkable affinity for a particular antigen. The variable domains are assembled by a process called V-(D)-J rearrangement and can then be subjected to somatic hypermutations which, after exposure to antigen and selection, allow affinity maturation for a particular antigen. This Homo sapiens (Human) protein is Immunoglobulin heavy variable 3-7.